Here is a 344-residue protein sequence, read N- to C-terminus: MQSLTIPRPDDWHLHLRDGAMLQTTVPATAAVFHRAVVMPNLVPPVTTVAAAMEYRERILAEIPAGMSFNPLMALYLTADTTPAEIAEAAANEHVIGFKLYPSGATTNSAAGVKSVEALAPVLAAMQEHQVPLLVHGEVTDSDIDIFDRERVFIERHLIPITERFPQLKLVLEHITTADAVKFVENANSNVAATMTPQHLLMNRNDLLVGGIRPHNYCLPILKRRSHQQALQQAALSGNPKFFLGTDSAPHVQANKETACGCAGCYSAPAAIELYAEFFSQHNALDKLANFASVFGADFYQLPRNTETIELVQQPWTVAETVDTATGPMVPYWAGSDLQWKLRG.

The Zn(2+) site is built by H13 and H15. Substrate contacts are provided by residues 15–17 (HLR) and N41. Zn(2+) is bound by residues K99, H136, and H174. K99 is subject to N6-carboxylysine. H136 contributes to the substrate binding site. L219 is a substrate binding site. D247 is a binding site for Zn(2+). D247 is an active-site residue. Residues H251 and A263 each contribute to the substrate site.

It belongs to the metallo-dependent hydrolases superfamily. DHOase family. Class II DHOase subfamily. Homodimer. Zn(2+) is required as a cofactor.

The enzyme catalyses (S)-dihydroorotate + H2O = N-carbamoyl-L-aspartate + H(+). It functions in the pathway pyrimidine metabolism; UMP biosynthesis via de novo pathway; (S)-dihydroorotate from bicarbonate: step 3/3. Functionally, catalyzes the reversible cyclization of carbamoyl aspartate to dihydroorotate. This is Dihydroorotase from Idiomarina loihiensis (strain ATCC BAA-735 / DSM 15497 / L2-TR).